A 201-amino-acid chain; its full sequence is Small ribosomal subunit protein uS4c (201 aa).

One can recognise an S4 RNA-binding domain in the interval 89 to 150 (MRLDNILFRL…KERSKALIQN (62 aa)).

Belongs to the universal ribosomal protein uS4 family. As to quaternary structure, part of the 30S ribosomal subunit. Contacts protein S5. The interaction surface between S4 and S5 is involved in control of translational fidelity.

It localises to the plastid. The protein resides in the chloroplast. Functionally, one of the primary rRNA binding proteins, it binds directly to 16S rRNA where it nucleates assembly of the body of the 30S subunit. With S5 and S12 plays an important role in translational accuracy. The chain is Small ribosomal subunit protein uS4c (rps4) from Phalaenopsis aphrodite subsp. formosana (Moth orchid).